The following is a 427-amino-acid chain: MESLTLQPIARVDGTINLPGSKSVSNRALLLAALAHGKTVLTNLLDSDDVRHMLNALAALGVSYTLSADRTRCEIIGNGGSLHAEGALELFLGNAGTAMRPLAAALCLGSNDIVLTGEPRMKERPIGHLVDALRLGRAKITYLEQENYPPLRLQGGFTGGNVDVDGSVSSQFLTALLMTAPLAPEDTVIRIKGDLVSKPYIDITLNLMKTFGVEIENQHYQQFVVKGGQSYQSPGTYLVEGDASSASYFLAAAAIKGGTVKVTGIGRNSMQGDIRFADVLEKMGATICWGDDYISCTRGELNAIDMDMNHIPDAAMTIATAALFAKGTTTLRNIYNWRVKETDRLFAMATELRKVGAEVEEGHDYIRITPPEKLNFAEIATYNDHRMAMCFSLVALSDTPVTILDPKCTAKTFPDYFEQLARISQAA.

Residues Lys22, Ser23, and Arg27 each contribute to the 3-phosphoshikimate site. Lys22 contributes to the phosphoenolpyruvate binding site. Residues Gly96 and Arg124 each contribute to the phosphoenolpyruvate site. 3-phosphoshikimate is bound by residues Ser169, Ser170, Gln171, Ser197, Asp313, Asn336, and Lys340. Phosphoenolpyruvate is bound at residue Gln171. Asp313 serves as the catalytic Proton acceptor. The phosphoenolpyruvate site is built by Arg344, Arg386, and Lys411.

It belongs to the EPSP synthase family. As to quaternary structure, monomer.

Its subcellular location is the cytoplasm. The enzyme catalyses 3-phosphoshikimate + phosphoenolpyruvate = 5-O-(1-carboxyvinyl)-3-phosphoshikimate + phosphate. It functions in the pathway metabolic intermediate biosynthesis; chorismate biosynthesis; chorismate from D-erythrose 4-phosphate and phosphoenolpyruvate: step 6/7. Catalyzes the transfer of the enolpyruvyl moiety of phosphoenolpyruvate (PEP) to the 5-hydroxyl of shikimate-3-phosphate (S3P) to produce enolpyruvyl shikimate-3-phosphate and inorganic phosphate. The chain is 3-phosphoshikimate 1-carboxyvinyltransferase from Shigella dysenteriae.